A 419-amino-acid chain; its full sequence is L-rhamnose isomerase (419 aa).

3 residues coordinate Mn(2+): His262, Asp294, and Asp296.

This sequence belongs to the rhamnose isomerase family. Homotetramer. Mn(2+) is required as a cofactor.

It is found in the cytoplasm. It carries out the reaction L-rhamnopyranose = L-rhamnulose. It participates in carbohydrate degradation; L-rhamnose degradation; glycerone phosphate from L-rhamnose: step 1/3. Functionally, catalyzes the interconversion of L-rhamnose and L-rhamnulose. This is L-rhamnose isomerase from Salmonella enteritidis PT4 (strain P125109).